Reading from the N-terminus, the 488-residue chain is MTFKDLRDFIAQLEQRGALKRIQVPISPVLEMTEVCDRTLRAKGPALLFEKPTGFDMPVLGNLFGTPERVALGMGAEDVGALREIGKLLAQLKEPEPPKGLKDAWAKLPMYRKVLSMAPKVLKDAPCQEVVEEGEDVDLGRLPVQTCWPGDVGPLITWGLTVTRGPNKERQNLGIYRQQVIGRNKVIMRWLSHRGGALDYREWCQKHPGQPYPVAVALGADPATILGAVTPVPDTLSEYAFAGLLRGHRTELVKCRGSDLQVPASAEIVLEGVIHPGEMADEGPYGDHTGYYNEVDRFPVFTVERVTRRQKPIYHSTYTGRPPDEPAILGVALNEVFVPILQKQFPEIVDFYLPPEGCSYRMAVVTMKKQYPGHAKRVMLGVWSFLRQFMYTKFVIVTDDDIDARDWNDVIWAITTRMDPKRDTVMIDNTPIDYLDFASPVSGLGSKMGLDATHKWPGETSREWGRAIVKDEAVTRRIDALWSSLGID.

Position 172 (Asn172) interacts with Mn(2+). Residues 175–177, 189–191, and 194–195 each bind prenylated FMN; these read IYR, RWL, and RG. Glu238 is a binding site for Mn(2+). Catalysis depends on Asp287, which acts as the Proton donor.

It belongs to the UbiD family. In terms of assembly, homohexamer. Requires prenylated FMN as cofactor. The cofactor is Mn(2+).

Its subcellular location is the cell membrane. The enzyme catalyses a 4-hydroxy-3-(all-trans-polyprenyl)benzoate + H(+) = a 2-(all-trans-polyprenyl)phenol + CO2. Its pathway is cofactor biosynthesis; ubiquinone biosynthesis. In terms of biological role, catalyzes the decarboxylation of 3-octaprenyl-4-hydroxy benzoate to 2-octaprenylphenol, an intermediate step in ubiquinone biosynthesis. This is 3-octaprenyl-4-hydroxybenzoate carboxy-lyase from Pseudomonas aeruginosa (strain LESB58).